The primary structure comprises 326 residues: Malate dehydrogenase (326 aa).

Position 11–17 (glycine 11–glycine 17) interacts with NAD(+). Residues arginine 92 and arginine 98 each coordinate substrate. Residues asparagine 105, glutamine 112, and valine 129–asparagine 131 contribute to the NAD(+) site. Residues asparagine 131 and arginine 162 each contribute to the substrate site. Residue histidine 187 is the Proton acceptor of the active site.

This sequence belongs to the LDH/MDH superfamily. MDH type 2 family.

It catalyses the reaction (S)-malate + NAD(+) = oxaloacetate + NADH + H(+). In terms of biological role, catalyzes the reversible oxidation of malate to oxaloacetate. In Leptospira borgpetersenii serovar Hardjo-bovis (strain JB197), this protein is Malate dehydrogenase.